We begin with the raw amino-acid sequence, 484 residues long: Cobyric acid synthase (484 aa).

Positions 251-438 (ALKIAVPVLP…LHGLFCSDAY (188 aa)) constitute a GATase cobBQ-type domain. The active-site Nucleophile is cysteine 333. The active site involves histidine 430.

The protein belongs to the CobB/CobQ family. CobQ subfamily.

Its pathway is cofactor biosynthesis; adenosylcobalamin biosynthesis. In terms of biological role, catalyzes amidations at positions B, D, E, and G on adenosylcobyrinic A,C-diamide. NH(2) groups are provided by glutamine, and one molecule of ATP is hydrogenolyzed for each amidation. The sequence is that of Cobyric acid synthase from Rhizobium rhizogenes (strain K84 / ATCC BAA-868) (Agrobacterium radiobacter).